Consider the following 863-residue polypeptide: MQRRGALFGMPGGSGGRKMAAGDIGELLVPHMPTIRVPRSGDRVYKNECAFSYDSPNSEGGLYVCMNTFLAFGREHVERHFRKTGQSVYMHLKRHVREKVRGASGGALPKRRNSKIFLDLDTDDDLNSDDYEYEDEAKLVIFPDHYEIALPNIEELPALVTIACDAVLSSKSPYRKQDPDTWENELPVSKYANNLTQLDNGVRIPPSGWKCARCDLRENLWLNLTDGSVLCGKWFFDSSGGNGHALEHYRDMGYPLAVKLGTITPDGADVYSFQEEEPVLDPHLAKHLAHFGIDMLHMHGTENGLQDNDIKLRVSEWEVIQESGTKLKPMYGPGYTGLKNLGNSCYLSSVMQAIFSIPEFQRAYVGNLPRIFDYSPLDPTQDFNTQMTKLGHGLLSGQYSKPPVKSELIEQVMKEEHKPQQNGISPRMFKAFVSKSHPEFSSNRQQDAQEFFLHLVNLVERNRIGSENPSDVFRFLVEERIQCCQTRKVRYTERVDYLMQLPVAMEAATNKDELIAYELTRREAEANRRPLPELVRAKIPFSACLQAFSEPENVDDFWSSALQAKSAGVKTSRFASFPEYLVVQIKKFTFGLDWVPKKFDVSIDMPDLLDINHLRARGLQPGEEELPDISPPIVIPDDSKDRLMNQLIDPSDIDESSVMQLAEMGFPLEACRKAVYFTGNMGAEVAFNWIIVHMEEPDFAEPLTMPGYGGAASAGASVFGASGLDNQPPEEIVAIITSMGFQRNQAIQALRATNNNLERALDWIFSHPEFEEDSDFVIEMENNANANIISEAKPEGPRVKDGSGTYELFAFISHMGTSTMSGHYICHIKKEGRWVIYNDHKVCASERPPKDLGYMYFYRRIPS.

Position 114 is a phosphoserine; by AURKB (Ser114). Thr122 carries the post-translational modification Phosphothreonine. The UBP-type; degenerate zinc finger occupies 187–295 (PVSKYANNLT…KHLAHFGIDM (109 aa)). Residues Cys211, Cys214, Cys231, and His244 each contribute to the Zn(2+) site. Residue Lys311 forms a Glycyl lysine isopeptide (Lys-Gly) (interchain with G-Cter in SUMO2) linkage. The region spanning 336-861 (TGLKNLGNSC…LGYMYFYRRI (526 aa)) is the USP domain. The active-site Nucleophile is Cys345. Lys405 participates in a covalent cross-link: Glycyl lysine isopeptide (Lys-Gly) (interchain with G-Cter in SUMO2). UBA domains follow at residues 652 to 693 (DIDE…IIVH) and 727 to 767 (QPPE…IFSH). His823 (proton acceptor) is an active-site residue.

This sequence belongs to the peptidase C19 family. As to quaternary structure, interacts with UFD1. Interacts (via UBA domains) with SIAH2 (when ubiquitinated). Interacts with BAG6; the interaction is direct and may mediate UBL4A deubiquitination. Interacts (via UBA 2 domain) with AMFR; the interaction is direct. Interacts with UBL4A; may be indirect via BAG6. Interacts with NEDD4. Post-translationally, phosphorylated by AURKB at Ser-114; leading to stabilization of cell cycle proteins such as SKP2 and AURKB, but not MCL1. As to expression, highly expressed in ovary and testes.

It is found in the cytoplasm. It carries out the reaction Thiol-dependent hydrolysis of ester, thioester, amide, peptide and isopeptide bonds formed by the C-terminal Gly of ubiquitin (a 76-residue protein attached to proteins as an intracellular targeting signal).. Specifically inhibited by spautin-1 (specific and potent autophagy inhibitor-1), a derivative of MBCQ that binds to USP13 and inhibits deubiquitinase activity. Regulated by PIK3C3/VPS34-containing complexes. The weak deubiquitinase activity in vitro suggests the existence of some mechanism that activates the enzyme. In terms of biological role, deubiquitinase that mediates deubiquitination of target proteins such as BECN1, MITF, SKP2 and USP10 and is involved in various processes such as autophagy, endoplasmic reticulum-associated degradation (ERAD), cell cycle progression or DNA damage response. Component of a regulatory loop that controls autophagy and p53/TP53 levels: mediates deubiquitination of BECN1, a key regulator of autophagy, leading to stabilize the PIK3C3/VPS34-containing complexes. Alternatively, forms with NEDD4 a deubiquitination complex, which subsequently stabilizes VPS34 to promote autophagy. Also deubiquitinates USP10, an essential regulator of p53/TP53 stability. In turn, PIK3C3/VPS34-containing complexes regulate USP13 stability, suggesting the existence of a regulatory system by which PIK3C3/VPS34-containing complexes regulate p53/TP53 protein levels via USP10 and USP13. Recruited by nuclear UFD1 and mediates deubiquitination of SKP2, thereby regulating endoplasmic reticulum-associated degradation (ERAD). Also regulates ERAD through the deubiquitination of UBL4A a component of the BAG6/BAT3 complex. Mediates stabilization of SIAH2 independently of deubiquitinase activity: binds ubiquitinated SIAH2 and acts by impairing SIAH2 autoubiquitination. Regulates the cell cycle progression by stabilizing cell cycle proteins such as SKP2 and AURKB. In addition, plays an important role in maintaining genomic stability and in DNA replication checkpoint activation via regulation of RAP80 and TOPBP1. Deubiquitinates the multifunctional protein HMGB1 and subsequently drives its nucleocytoplasmic localization and its secretion. Positively regulates type I and type II interferon signalings by deubiquitinating STAT1 but negatively regulates antiviral response by deubiquitinating STING1. This is Ubiquitin carboxyl-terminal hydrolase 13 (USP13) from Homo sapiens (Human).